The chain runs to 234 residues: Melanoregulin (234 aa).

Residues 215–234 (MNQNISGGEDEDEDESEPDD) form a disordered region. A compositionally biased stretch (acidic residues) spans 222 to 234 (GEDEDEDESEPDD).

This sequence belongs to the melanoregulin family.

It is found in the apical cell membrane. It localises to the melanosome membrane. Its subcellular location is the lysosome membrane. The protein localises to the cytoplasmic vesicle membrane. In terms of biological role, probably functions as a cargo-recognition protein that couples cytoplasmic vesicles to the transport machinery. Contributes to retrograde melanosome transport from the cell periphery to the center. Overexpression causes accumulation of late endosomes and/or lysosomes at the microtubule organising center (MTOC) at the center of the cell. Probably binds cholesterol and requires the presence of cholesterol in membranes to function in microtubule-mediated retrograde organelle transport. Binds phosphatidylinositol 3-phosphate, phosphatidylinositol 4-phosphate, phosphatidylinositol 5-phosphate and phosphatidylinositol 3,5-bisphosphate. This is Melanoregulin (mreg) from Danio rerio (Zebrafish).